Consider the following 398-residue polypeptide: Chalcone synthase 1 (398 aa).

58–65 is a binding site for CoA; that stretch reads KFKRMCDK. Residue Cys167 is the Acyl-thioester intermediate of the active site. Substrate-binding positions include Thr200 and 219-220; that span reads GD. A CoA-binding site is contributed by Ala311.

It belongs to the thiolase-like superfamily. Chalcone/stilbene synthases family. As to quaternary structure, homodimer.

The enzyme catalyses (E)-4-coumaroyl-CoA + 3 malonyl-CoA + 3 H(+) = 2',4,4',6'-tetrahydroxychalcone + 3 CO2 + 4 CoA. It participates in secondary metabolite biosynthesis; flavonoid biosynthesis. Functionally, the primary product of this enzyme is 4,2',4',6'-tetrahydroxychalcone (also termed naringenin-chalcone or chalcone) which can under specific conditions spontaneously isomerize into naringenin. This Oryza sativa subsp. japonica (Rice) protein is Chalcone synthase 1 (CHS1).